Here is a 368-residue protein sequence, read N- to C-terminus: UPF0284 protein Tery_1555 (368 aa).

It belongs to the UPF0284 family.

The polypeptide is UPF0284 protein Tery_1555 (Trichodesmium erythraeum (strain IMS101)).